The sequence spans 105 residues: Thioredoxin (105 aa).

Positions 2 to 105 (VKQIESKYAF…KLEATINELI (104 aa)) constitute a Thioredoxin domain. Residue Lys3 is modified to N6-acetyllysine. The residue at position 8 (Lys8) is an N6-succinyllysine. Residues Cys32 and Cys35 each act as nucleophile in the active site. Cys32 and Cys35 are oxidised to a cystine. Position 39 is an N6-acetyllysine (Lys39). Residues Cys62 and Cys69 each carry the S-nitrosocysteine modification. Cys73 bears the S-nitrosocysteine; alternate mark. Lys94 carries the post-translational modification N6-acetyllysine; alternate. At Lys94 the chain carries N6-succinyllysine; alternate.

This sequence belongs to the thioredoxin family. As to quaternary structure, homodimer; disulfide-linked. Interacts with TXNIP through the redox-active site. Interacts with MAP3K5 and CASP3. Interacts with APEX1; the interaction stimulates the FOS/JUN AP-1 DNA-binding activity in a redox-dependent manner. Post-translationally, in the fully reduced protein, both Cys-69 and Cys-73 are nitrosylated in response to nitric oxide (NO). When two disulfide bonds are present in the protein, only Cys-73 is nitrosylated. Cys-73 can serve as donor for nitrosylation of target proteins.

It is found in the nucleus. Its subcellular location is the cytoplasm. The protein localises to the secreted. In terms of biological role, participates in various redox reactions through the reversible oxidation of its active center dithiol to a disulfide and catalyzes dithiol-disulfide exchange reactions. Plays a role in the reversible S-nitrosylation of cysteine residues in target proteins, and thereby contributes to the response to intracellular nitric oxide. Nitrosylates the active site Cys of CASP3 in response to nitric oxide (NO), and thereby inhibits caspase-3 activity. Induces the FOS/JUN AP-1 DNA binding activity in ionizing radiation (IR) cells through its oxidation/reduction status and stimulates AP-1 transcriptional activity. This is Thioredoxin (TXN) from Bos taurus (Bovine).